Consider the following 252-residue polypeptide: Body wall muscle protein HR-29 (252 aa).

S2 carries the post-translational modification N-acetylserine. 3 consecutive repeat copies span residues 37–55, 56–74, and 75–93. Residues 37–93 form a 3 X 19 AA approximate tandem repeats region; sequence RDWMTTPYSSTGIGRRDLSQDWMTTPYTPAGVGRRDLSQDWMTTPYTSKGIGSRNLS. In terms of domain architecture, sHSP spans 138-249; that stretch reads ISVEHEGKTT…KKTAVPVTVE (112 aa).

It belongs to the small heat shock protein (HSP20) family. In terms of assembly, exists as an oligomer.

The protein resides in the membrane. In terms of biological role, may be a component of myofibrils where it acts as a stabilizer. This chain is Body wall muscle protein HR-29, found in Halocynthia roretzi (Sea squirt).